The primary structure comprises 231 residues: MAKLTKKQKALQGKVDSTKLYAFAEAVALVKEAATAKFDESIDVAVQLGVDAKKSDQVVRGAVVLPNGTGKTTRVAVFAQGAKAEEAKAAGADIVGMDDLAAQVKAGDMPFDVVIAAPDAMRVVGTLGQILGPRGLMPNPKVGTVTPDVATAVKNAKAGQVQFRVDKAGIVHSTIGRRSFDNDKLQGNLAALIEALNKAKPATSKGVYLRKVAVSSTMGVGVRVDTQTIAA.

This sequence belongs to the universal ribosomal protein uL1 family. As to quaternary structure, part of the 50S ribosomal subunit.

In terms of biological role, binds directly to 23S rRNA. The L1 stalk is quite mobile in the ribosome, and is involved in E site tRNA release. Its function is as follows. Protein L1 is also a translational repressor protein, it controls the translation of the L11 operon by binding to its mRNA. The polypeptide is Large ribosomal subunit protein uL1 (Acidovorax ebreus (strain TPSY) (Diaphorobacter sp. (strain TPSY))).